The primary structure comprises 467 residues: Stromal membrane-associated protein 1 (467 aa).

The 119-residue stretch at Gln18 to Ile136 folds into the Arf-GAP domain. Residues Cys33 to Cys56 form a C4-type zinc finger. Positions Pro145–Leu155 are enriched in polar residues. 2 disordered regions span residues Pro145–Pro224 and Lys408–Lys467. Basic and acidic residues-rich tracts occupy residues Asp160–Ala185 and Lys192–Lys204. The Interaction with clathrin heavy chains motif lies at Leu218–Asp222. The segment covering Gln413–Pro438 has biased composition (polar residues). Over residues Ser446–Lys467 the composition is skewed to low complexity.

In terms of assembly, interacts with ARF6. Interacts with clathrin heavy chains via the clathrin box-like motif. Detected in bone marrow, adrenal gland, trachea, lymph node, spinal cord, peripheral blood leukocytes, thyroid and stomach.

It localises to the cell membrane. GTPase activating protein that acts on ARF6. Plays a role in clathrin-dependent endocytosis. May play a role in erythropoiesis. The sequence is that of Stromal membrane-associated protein 1 (SMAP1) from Homo sapiens (Human).